We begin with the raw amino-acid sequence, 564 residues long: Serine/threonine-protein kinase DBF20 (564 aa).

Residue serine 17 is modified to Phosphoserine. The disordered stretch occupies residues 24–62 (LNIPKPTSPQAQYRPARKSENGRLTPGLPRSYKPCDSDD). Positions 169-469 (FQILTQVGQG…FEQVRKMSYF (301 aa)) constitute a Protein kinase domain. ATP-binding positions include 175 to 183 (VGQGGYGQV) and lysine 198. The active-site Proton acceptor is aspartate 292. Position 366 is a phosphoserine (serine 366). Positions 470-547 (AEINFETLRT…RHRDGKQGSS (78 aa)) constitute an AGC-kinase C-terminal domain. Position 536 is a phosphothreonine (threonine 536).

Belongs to the protein kinase superfamily. Ser/Thr protein kinase family.

It carries out the reaction L-seryl-[protein] + ATP = O-phospho-L-seryl-[protein] + ADP + H(+). The enzyme catalyses L-threonyl-[protein] + ATP = O-phospho-L-threonyl-[protein] + ADP + H(+). Functionally, is probably a Ser/Thr-protein kinase that may function in initiation of DNA synthesis and also in late nuclear division. The protein is Serine/threonine-protein kinase DBF20 (DBF20) of Saccharomyces cerevisiae (strain ATCC 204508 / S288c) (Baker's yeast).